The chain runs to 504 residues: Anaerobic nitric oxide reductase transcription regulator NorR (504 aa).

Asp-57 carries the 4-aspartylphosphate modification. The Sigma-54 factor interaction domain occupies Met-187–Val-416. ATP contacts are provided by residues Gly-215–Glu-222 and Ala-278–Glu-287. Positions Trp-479–Lys-498 form a DNA-binding region, H-T-H motif.

It functions in the pathway nitrogen metabolism; nitric oxide reduction. Its function is as follows. Required for the expression of anaerobic nitric oxide (NO) reductase, acts as a transcriptional activator for at least the norVW operon. Activation also requires sigma-54. This Escherichia coli (strain SE11) protein is Anaerobic nitric oxide reductase transcription regulator NorR.